The sequence spans 578 residues: Vesicular acetylcholine transporter (578 aa).

The Cytoplasmic portion of the chain corresponds to 1-32 (MASFQIPVINLEVREVKDIVWEKIQEPVNQRR). The helical transmembrane segment at 33 to 53 (LILVIVSIALLLDNMLYMVIV) threads the bilayer. Over 54–98 (PIIPDYLREIGSFDDGPTPPPLRDNITGKIIPVHHDHHGQDSATG) the chain is Lumenal, vesicle. An N-linked (GlcNAc...) asparagine glycan is attached at asparagine 78. A helical membrane pass occupies residues 99 to 119 (ILFASKAIVQLMVNPFSGGLI). Residues 120–125 (DKIGYD) are Cytoplasmic-facing. A helical membrane pass occupies residues 126–146 (LPMMIGLTIMFFSTAVFACGS). Over 147 to 154 (SYSVLFFA) the chain is Lumenal, vesicle. A helical transmembrane segment spans residues 155–175 (RSLQGAGSAFADTAGLAMIAD). At 176 to 187 (RFTEENERSQAL) the chain is on the cytoplasmic side. Residues 188–208 (GIALAFISFGCLVAPPFGGAL) form a helical membrane-spanning segment. The Lumenal, vesicle segment spans residues 209–215 (YQFAGKE). The chain crosses the membrane as a helical span at residues 216 to 236 (VPFLILALVCLLDGLMLLLVM). Topologically, residues 237–263 (KPVKEAMKQSKDVQDQVIPIWRLLMDP) are cytoplasmic. The helical transmembrane segment at 264 to 284 (YIAVCAGALTMSNVALAFLEP) threads the bilayer. Residues 285–299 (TISLWMEDNMTTDNW) are Lumenal, vesicle-facing. A glycan (N-linked (GlcNAc...) asparagine) is linked at asparagine 293. Residues 300–320 (KIGMVWLPAFFPHVLGVVITV) traverse the membrane as a helical segment. Topologically, residues 321 to 330 (KMARKYPQHQ) are cytoplasmic. A helical membrane pass occupies residues 331-351 (WLMAAGGLALEGFSCFIIPFC). Over 352-355 (SGYK) the chain is Lumenal, vesicle. A helical membrane pass occupies residues 356 to 376 (MLMLPICVICFGIALIDTALL). At 377–387 (PTLGYLVDVRY) the chain is on the cytoplasmic side. Residues 388–408 (VSVYGSIYAIADISYSIAYAV) form a helical membrane-spanning segment. Topologically, residues 409-413 (GPIIA) are lumenal, vesicle. The helical transmembrane segment at 414–434 (GGVVEAIGFTALNFLIAFSNL) threads the bilayer. Over 435–578 (AYVPVLRKLR…APANPFRQGF (144 aa)) the chain is Cytoplasmic. 2 stretches are compositionally biased toward low complexity: residues 507-534 (EYQQ…EQGG) and 549-563 (QQQQ…QQVQ). Residues 507–578 (EYQQQQQGYQ…APANPFRQGF (72 aa)) are disordered.

Belongs to the major facilitator superfamily. Vesicular transporter family.

It is found in the membrane. Involved in acetylcholine transport into synaptic vesicles. In Drosophila melanogaster (Fruit fly), this protein is Vesicular acetylcholine transporter (VAChT).